We begin with the raw amino-acid sequence, 366 residues long: tRNA/tmRNA (uracil-C(5))-methyltransferase (366 aa).

The S-adenosyl-L-methionine site is built by Q190, Y218, N223, E239, and D299. The active-site Nucleophile is C324. The Proton acceptor role is filled by E358.

This sequence belongs to the class I-like SAM-binding methyltransferase superfamily. RNA M5U methyltransferase family. TrmA subfamily.

It carries out the reaction uridine(54) in tRNA + S-adenosyl-L-methionine = 5-methyluridine(54) in tRNA + S-adenosyl-L-homocysteine + H(+). The catalysed reaction is uridine(341) in tmRNA + S-adenosyl-L-methionine = 5-methyluridine(341) in tmRNA + S-adenosyl-L-homocysteine + H(+). Functionally, dual-specificity methyltransferase that catalyzes the formation of 5-methyluridine at position 54 (m5U54) in all tRNAs, and that of position 341 (m5U341) in tmRNA (transfer-mRNA). This Escherichia coli O127:H6 (strain E2348/69 / EPEC) protein is tRNA/tmRNA (uracil-C(5))-methyltransferase.